We begin with the raw amino-acid sequence, 70 residues long: DNA-directed RNA polymerase subunit omega (70 aa).

The protein belongs to the RNA polymerase subunit omega family. As to quaternary structure, the RNAP catalytic core consists of 2 alpha, 1 beta, 1 beta' and 1 omega subunit. When a sigma factor is associated with the core the holoenzyme is formed, which can initiate transcription.

The catalysed reaction is RNA(n) + a ribonucleoside 5'-triphosphate = RNA(n+1) + diphosphate. In terms of biological role, promotes RNA polymerase assembly. Latches the N- and C-terminal regions of the beta' subunit thereby facilitating its interaction with the beta and alpha subunits. The polypeptide is DNA-directed RNA polymerase subunit omega (Staphylococcus epidermidis (strain ATCC 35984 / DSM 28319 / BCRC 17069 / CCUG 31568 / BM 3577 / RP62A)).